The sequence spans 627 residues: Protein fem-1 homolog B (627 aa).

ANK repeat units follow at residues 45–74, 87–116, 120–149, and 153–182; these read QRST…VQTQ, DGAT…NVNH, TNST…NISI, and YDNT…DPNA. Residues histidine 185, cysteine 186, and histidine 218 each contribute to the Zn(2+) site. ANK repeat units follow at residues 186-215 and 218-248; these read CGAT…AIVV and HGMT…DRRS. The stretch at 344 to 377 is one TPR repeat; the sequence is SHPIIYRGAVYADNMEFEQCIKLWLHALHLRQKG. ANK repeat units follow at residues 483-527 and 531-568; these read EGFS…EVNA and EGNS…HTDM.

This sequence belongs to the fem-1 family. Component of a CRL2 E3 ubiquitin-protein ligase complex, also named ECS (Elongin BC-CUL2/5-SOCS-box protein) complex, composed of CUL2, Elongin BC (ELOB and ELOC), RBX1 and substrate-specific adapter FEM1B. Homooligomer. Interacts with PPM1F and PHTF1. Interacts with the death domain of FAS/TNFRSF6 and TNFRSF1A. Interacts with CHEK1. Interacts with NKX3-1. In terms of tissue distribution, expressed in pancreatic islets, within both beta cells and non-beta cells (at protein level). Highly expressed in adult testis; expressed in all types of spermatogonia. Also expressed in the prostate of neonatal mice.

The protein localises to the cytoplasm. It localises to the nucleus. It functions in the pathway protein modification; protein ubiquitination. Activity of the CRL2(FEM1B) complex toward FNIP1 is inhibited by BEX family proteins (BEX1, BEX2, BEX3 and/or BEX4) in absence of reductive stress. Mechanistically, BEX proteins act as pseudosubstrate inhibitors that associate with FEM1B via zinc in absence of reductive stress, thereby preventing association between FEM1B and FNIP1. Functionally, substrate-recognition component of a Cul2-RING (CRL2) E3 ubiquitin-protein ligase complex of the DesCEND (destruction via C-end degrons) pathway, which recognizes a C-degron located at the extreme C terminus of target proteins, leading to their ubiquitination and degradation. The C-degron recognized by the DesCEND pathway is usually a motif of less than ten residues and can be present in full-length proteins, truncated proteins or proteolytically cleaved forms. The CRL2(FEM1B) complex specifically recognizes proteins ending with -Gly-Leu-Asp-Arg, such as CDK5R1, leading to their ubiquitination and degradation. Also acts as a regulator of the reductive stress response by mediating ubiquitination of reduced FNIP1: in response to reductive stress, the CRL2(FEM1B) complex specifically recognizes a conserved Cys degron in FNIP1 when this degron is reduced, leading to FNIP1 degradation and subsequent activation of mitochondria to recalibrate reactive oxygen species (ROS). Mechanistically, recognizes and binds reduced FNIP1 through two interface zinc ions, which act as a molecular glue that recruit reduced FNIP1 to FEM1B. Promotes ubiquitination of GLI1, suppressing GLI1 transcriptional activator activity. Promotes ubiquitination and degradation of ANKRD37. Promotes ubiquitination and degradation of SLBP. Involved in apoptosis by acting as a death receptor-associated protein that mediates apoptosis. Also involved in glucose homeostasis in pancreatic islet. May also act as an adapter/mediator in replication stress-induced signaling that leads to the activation of CHEK1. The sequence is that of Protein fem-1 homolog B from Mus musculus (Mouse).